The primary structure comprises 425 residues: Serine hydroxymethyltransferase (425 aa).

(6S)-5,6,7,8-tetrahydrofolate contacts are provided by residues leucine 122 and 126–128 (GHL). The residue at position 231 (lysine 231) is an N6-(pyridoxal phosphate)lysine. 355 to 357 (SPF) is a (6S)-5,6,7,8-tetrahydrofolate binding site.

It belongs to the SHMT family. Homodimer. Pyridoxal 5'-phosphate is required as a cofactor.

The protein resides in the cytoplasm. It catalyses the reaction (6R)-5,10-methylene-5,6,7,8-tetrahydrofolate + glycine + H2O = (6S)-5,6,7,8-tetrahydrofolate + L-serine. It participates in one-carbon metabolism; tetrahydrofolate interconversion. Its pathway is amino-acid biosynthesis; glycine biosynthesis; glycine from L-serine: step 1/1. Its function is as follows. Catalyzes the reversible interconversion of serine and glycine with tetrahydrofolate (THF) serving as the one-carbon carrier. This reaction serves as the major source of one-carbon groups required for the biosynthesis of purines, thymidylate, methionine, and other important biomolecules. Also exhibits THF-independent aldolase activity toward beta-hydroxyamino acids, producing glycine and aldehydes, via a retro-aldol mechanism. The protein is Serine hydroxymethyltransferase of Rippkaea orientalis (strain PCC 8801 / RF-1) (Cyanothece sp. (strain PCC 8801)).